Consider the following 449-residue polypeptide: Trigger factor (449 aa).

Residues G174–P261 enclose the PPIase FKBP-type domain. Positions E430–A449 are disordered. Over residues K437 to A449 the composition is skewed to basic and acidic residues.

The protein belongs to the FKBP-type PPIase family. Tig subfamily.

The protein resides in the cytoplasm. It catalyses the reaction [protein]-peptidylproline (omega=180) = [protein]-peptidylproline (omega=0). Its function is as follows. Involved in protein export. Acts as a chaperone by maintaining the newly synthesized protein in an open conformation. Functions as a peptidyl-prolyl cis-trans isomerase. The chain is Trigger factor from Synechococcus sp. (strain CC9311).